The chain runs to 1963 residues: Myosin-4 (1963 aa).

A Myosin N-terminal SH3-like domain is found at 28 to 77; the sequence is DSKKNVWIPDPEEGYLAGEITATKGDQVTIVTARGNEVTLKKELVQEMNP. The Myosin motor domain maps to 81–787; sequence EKTEDMSNLS…VLAHLEDIRD (707 aa). Lys-125 carries the N6,N6,N6-trimethyllysine modification. ATP is bound at residue 174 to 181; that stretch reads GESGAGKT. 2 actin-binding regions span residues 662–684 and 766–780; these read LNNLMTMLNKTHPHFIRCIIPNE and RIGLTKVFFKAGVLA. Residues 848–1161 are alpha-helical tailpiece (S2); sequence MLKAGKEAEE…LEELGEKLDE (314 aa). Positions 848-1963 form a coiled coil; it reads MLKAGKEAEE…SPSRARASDF (1116 aa). 2 stretches are compositionally biased toward basic and acidic residues: residues 970-988 and 1133-1146; these read LRKAESEKQSKDHQIRSLQ and NERQSRSKADRAKS. 2 disordered regions span residues 970–990 and 1125–1146; these read LRKAESEKQSKDHQIRSLQDE and SELEEELENERQSRSKADRAKS. Positions 1162-1173 are hinge; that stretch reads QGGATAAQVEVN. Residues 1162–1963 are light meromyosin (LMM); it reads QGGATAAQVE…SPSRARASDF (802 aa). 2 disordered regions span residues 1317–1336 and 1912–1963; these read LTSQLEEARRTADEEARERQ and LEDA…ASDF. A compositionally biased stretch (basic and acidic residues) spans 1322-1336; sequence EEARRTADEEARERQ.

It belongs to the TRAFAC class myosin-kinesin ATPase superfamily. Myosin family. Muscle myosin is a hexameric protein that consists of 2 heavy chain subunits (MHC), 2 alkali light chain subunits (MLC) and 2 regulatory light chain subunits (MLC-2). Forms a complex composed of chaperone unc-45, unc-54 and ubiquitin-protein ligase ufd-2; promotes poly-ubiquitination of unfolded unc-54. Within the complex interacts with unc-45 (via UCS domain) and ufd-2. Interacts with itr-1 (via c-terminal coiled coil domain). Post-translationally, unfolded unc-54 is poly-ubiquitinated by ufd-2.

Its subcellular location is the cytoplasm. The protein resides in the myofibril. Functionally, required for muscle contraction. This Caenorhabditis elegans protein is Myosin-4 (unc-54).